The sequence spans 61 residues: MRKCISICFYEEENDNEDFEEEVELSREDLNQIINELAPFLIKLLTDLTELTQKKEESENE.

Residues tyrosine 10–glutamate 61 adopt a coiled-coil conformation.

This is an uncharacterized protein from Acidianus bottle-shaped virus (isolate Italy/Pozzuoli) (ABV).